The following is a 317-amino-acid chain: tRNA-cytidine(32) 2-sulfurtransferase (317 aa).

The tract at residues 1–29 (MNTANNTLPTAADWAGEDGAPDAADTRKI) is disordered. A PP-loop motif motif is present at residues 65–70 (SGGKDS). 3 residues coordinate [4Fe-4S] cluster: Cys140, Cys143, and Cys231.

It belongs to the TtcA family. Homodimer. Mg(2+) is required as a cofactor. It depends on [4Fe-4S] cluster as a cofactor.

The protein resides in the cytoplasm. The enzyme catalyses cytidine(32) in tRNA + S-sulfanyl-L-cysteinyl-[cysteine desulfurase] + AH2 + ATP = 2-thiocytidine(32) in tRNA + L-cysteinyl-[cysteine desulfurase] + A + AMP + diphosphate + H(+). It participates in tRNA modification. In terms of biological role, catalyzes the ATP-dependent 2-thiolation of cytidine in position 32 of tRNA, to form 2-thiocytidine (s(2)C32). The sulfur atoms are provided by the cysteine/cysteine desulfurase (IscS) system. In Acidovorax ebreus (strain TPSY) (Diaphorobacter sp. (strain TPSY)), this protein is tRNA-cytidine(32) 2-sulfurtransferase.